We begin with the raw amino-acid sequence, 357 residues long: MGSLEVERKTVGWAARDPSGVLSPYEYTLRNTGPQDVYVEVMCCGICHTDVHQIKNDLGMSNYPMVPGHEVVGEVVEVGSEVTKFRAGDVVGVGCIVGSCGNCRPCNSDIEQYCNKKIWSYNDVYPDGKPTQGGFAGAMVVDQKFVVKIPDGMAPEQAAPLLCAGVTVYSPLNHFGLKQSGLRGGILGLGGVGHMGVKIAKAMGHHVTVISSSDKKRAEALDHLGADDYLVSSDAARMQEAADSLDYIIDTVPVFHPLEPYLSLLKIDGKLILMGVVNTPLQFVSPMVMLGRKSITGSFIGSMKELAEMLEFCKEKDLSSTIEIVKMDYINTAFERLEKNDVRYRFVVDVAGSKLYQ.

A Zn(2+)-binding site is contributed by C47. T49 is a binding site for NADP(+). Zn(2+) contacts are provided by H69, E70, C100, C103, C106, C114, and C163. Residues T167, 188 to 193 (GLGGVG), 211 to 216 (SSSDKK), T251, G275, and 298 to 300 (SFI) contribute to the NADP(+) site.

This sequence belongs to the zinc-containing alcohol dehydrogenase family. Homodimer. The cofactor is Zn(2+). As to expression, expressed in leaves, mainly in peltate glands.

It carries out the reaction (E)-cinnamyl alcohol + NADP(+) = (E)-cinnamaldehyde + NADPH + H(+). It catalyses the reaction (E)-coniferol + NADP(+) = (E)-coniferaldehyde + NADPH + H(+). The enzyme catalyses (E)-sinapyl alcohol + NADP(+) = (E)-sinapaldehyde + NADPH + H(+). The catalysed reaction is (E)-4-coumaroyl alcohol + NADP(+) = (E)-4-coumaraldehyde + NADPH + H(+). It carries out the reaction (E)-caffeyl alcohol + NADP(+) = (E)-caffeyl aldehyde + NADPH + H(+). The protein operates within aromatic compound metabolism; phenylpropanoid biosynthesis. 60% inhibition by 5 mM Ca(+), Mg(+) or Cu(+). Involved in the production of citral, a mixture of geranial and neral with a strong lemony scent. Reversibly oxidizes geraniol to produce geranial at half the efficiency compared with its activity with cinnamyl alcohol. Does not use nerol and neral as substrates. This Ocimum basilicum (Sweet basil) protein is Cinnamyl alcohol dehydrogenase 1 (CAD1).